The sequence spans 315 residues: MQTKLLAIMLAAPVVFSSQEASASDFFGPEKISTEINLGTLSGKTKERVYEPEEGGRKVSQLDWKYSNAAILKGAVNWELNPWLSVGAAGWTTLNSRGGNMVDQDWMDSGTPGTWTDESRHPDTRLNYANEFDLNVKGWFLKESDYRLAIMAGYQESRYSFNATGGTYIYSENGGFRNETGALPDKIKVIGYKQHFKIPYVGLTGNYRYDNFEFGGAFKYSGWVRGSDNDEHYVRQTTFRSKVINQNYYSVAVNAGYYITPEAKVYIEGVWSRLTNKKGDTSLYDRSDNTSEHNNNGAGIENYNFITTAGLKYTF.

A signal peptide spans 1–23 (MQTKLLAIMLAAPVVFSSQEASA). Residues D103, D105, D230, and H232 contribute to the active site.

This sequence belongs to the peptidase A26 family.

The protein resides in the cell outer membrane. Its function is as follows. Protease; also acts as a receptor for bacteriophage Ox2. This chain is Outer membrane protease OmpP (ompP), found in Escherichia coli (strain K12).